A 311-amino-acid polypeptide reads, in one-letter code: Taste receptor type 2 member 40 (311 aa).

The Extracellular segment spans residues 1-9; sequence MSSLFSSFC. Residues 10 to 30 form a helical membrane-spanning segment; the sequence is LVIAIFESVVGLLGNGTIVAV. Topologically, residues 31–55 are cytoplasmic; it reads SSTSCIRSKILSSYDVIVIFLSLSR. The helical transmembrane segment at 56 to 76 threads the bilayer; the sequence is FFLQLWMILDFLLIFFCQPSY. Residues 77 to 87 lie on the Extracellular side of the membrane; it reads YEENLFVTFKT. A helical transmembrane segment spans residues 88 to 108; the sequence is VFIFLNSYSFWFAAWLSVFYC. At 109–128 the chain is on the cytoplasmic side; the sequence is VKVASFTQSFLSWLKQRIAS. A helical transmembrane segment spans residues 129-149; the sequence is LIPWMLITSSLFSFATSLPFF. The Extracellular portion of the chain corresponds to 150-178; that stretch reads WDSYNAHSNFTTPLTMTNSSKRITTRKTN. The helical transmembrane segment at 179–199 threads the bilayer; the sequence is LIFLILLCNVGIALPSIMLVF. Residues 200–235 are Cytoplasmic-facing; it reads SSILLIRSLWRHTRQMQNNATGFRDPSLEALIGAIK. Residues 236-256 form a helical membrane-spanning segment; that stretch reads TVFSFLLLYITNFIALILILS. Residues 257–266 lie on the Extracellular side of the membrane; it reads DTFVPLSTEE. A helical transmembrane segment spans residues 267-287; the sequence is AICVVVVAACPAGQSMVLIWS. The Cytoplasmic segment spans residues 288 to 311; it reads NPRFRELLSSILHYVNSCVRARCS.

It belongs to the G-protein coupled receptor T2R family. In terms of tissue distribution, expressed in the oral cavity, as well as in the gastrointestinal tract, including in the upper palate, tongue, proventriculus, ventriculus, duodenum, jejunum, ileum, cecum and colon.

It is found in the cell membrane. In terms of biological role, bitter taste receptor. Binds quinine, dextromethorphan, diphenhydramine, diphenidol, chlorpheniramine, diphenidol, chloramphenicol, chloroquine and coumarin, this latter being a weak agonist, as well as epiquinidine, ethylhydrocupreine and quinidine. The polypeptide is Taste receptor type 2 member 40 (TAS2R40) (Gallus gallus (Chicken)).